The following is a 544-amino-acid chain: Chaperonin GroEL 2 (544 aa).

ATP-binding positions include 30–33, lysine 51, 87–91, glycine 415, and aspartate 496; these read TLGP and DGTTT.

This sequence belongs to the chaperonin (HSP60) family. In terms of assembly, forms a cylinder of 14 subunits composed of two heptameric rings stacked back-to-back. Interacts with the co-chaperonin GroES.

The protein resides in the cytoplasm. The catalysed reaction is ATP + H2O + a folded polypeptide = ADP + phosphate + an unfolded polypeptide.. Its function is as follows. Together with its co-chaperonin GroES, plays an essential role in assisting protein folding. The GroEL-GroES system forms a nano-cage that allows encapsulation of the non-native substrate proteins and provides a physical environment optimized to promote and accelerate protein folding. The protein is Chaperonin GroEL 2 of Rhizobium johnstonii (strain DSM 114642 / LMG 32736 / 3841) (Rhizobium leguminosarum bv. viciae).